A 518-amino-acid chain; its full sequence is Nitrogenase iron-iron protein alpha chain (518 aa).

Cys49, Cys75, and Cys138 together coordinate [8Fe-7S] cluster. [8Fe-9S-C-homocitryl] cluster-binding residues include Cys257 and His423.

It belongs to the NifD/NifK/NifE/NifN family. As to quaternary structure, hexamer of two alpha, two beta, and two delta chains. [8Fe-7S] cluster serves as cofactor. It depends on [8Fe-9S-C-homocitryl] cluster as a cofactor.

The catalysed reaction is N2 + 8 reduced [2Fe-2S]-[ferredoxin] + 16 ATP + 16 H2O = H2 + 8 oxidized [2Fe-2S]-[ferredoxin] + 2 NH4(+) + 16 ADP + 16 phosphate + 6 H(+). Its function is as follows. This iron-iron protein is part of the nitrogenase complex that catalyzes the key enzymatic reactions in nitrogen fixation. Other nitrogenase complexes utilize a molybdenum-iron protein or a vanadium-iron protein. In Azotobacter vinelandii, this protein is Nitrogenase iron-iron protein alpha chain (anfD).